Consider the following 543-residue polypeptide: Steroid receptor seven-up, isoforms B/C (543 aa).

The tract at residues 38 to 191 (PPHSAWHEPP…HSQSSNSGSQ (154 aa)) is disordered. The segment covering 56–68 (AASAGPGTTTGSV) has biased composition (low complexity). The segment covering 83–101 (QQSAVIKQDLSCPSLNQAG) has biased composition (polar residues). Over residues 122–141 (GSAGGHHSGSGSGSGSGVNP) the composition is skewed to gly residues. The segment covering 158–170 (MLTSIKGQPTGCG) has biased composition (polar residues). Positions 171–191 (STTPSSQANSSHSQSSNSGSQ) are enriched in low complexity. The nuclear receptor DNA-binding region spans 197 to 272 (NIECVVCGDK…MGMRREAVQR (76 aa)). 2 NR C4-type zinc fingers span residues 200–220 (CVVC…CEGC) and 236–260 (CRGS…LKKC). The 226-residue stretch at 307–532 (YLSSYISLLL…TLIRDMLLSG (226 aa)) folds into the NR LBD domain.

Belongs to the nuclear hormone receptor family. NR2 subfamily. In terms of tissue distribution, expressed in several embryonic tissues; dorsal vessel, oenocyte and fat body. CNS expression is dynamic and confined to temporally restricted subsections of the NB lineage; expressed in many NB and GMCs, but only a small number of neurons.

It is found in the nucleus. Its function is as follows. Receptor that is required in photoreceptors R1, R3, R4 and R6 during eye development; generation of the ganglion mother cell-2 (GMC-2) fate in the nb7-3 lineage, coinciding with the transition in the expression of HB to KR in the neuroblasts (NBs). This chain is Steroid receptor seven-up, isoforms B/C (svp), found in Drosophila melanogaster (Fruit fly).